A 240-amino-acid polypeptide reads, in one-letter code: Probable transcriptional regulatory protein YrbC (240 aa).

This sequence belongs to the TACO1 family.

Its subcellular location is the cytoplasm. The chain is Probable transcriptional regulatory protein YrbC (yrbC) from Bacillus subtilis (strain 168).